Consider the following 1097-residue polypeptide: MSSSALQVAKTATYLPDLVEVQRASFKWFLEQGLIEELQNFSPISDYTGKLELHFIGEEYRLKRPRHDVEEAKRRDATFASQMYVTCRLINKETGEIKEQEVFIGELPLMTERGTFIINGAERVIVNQIVRSPGVYFKDELDKNGRRTYNASVIPNRGAWLKFETDKNNLLYVRVDKTRKINAHVLMRAMGLSDNDVVDKLRHPEFYQSSIESANDEGINSEDQALLELYKKLRPGEPPSVSGGQQLLHSRFFDPKRYDLGRVGRYKINKKLRLTVPDDVRTLTHEDVLSTIDYLINLELDIGGASLDDIDHLGNRRVRSVGELLQNQVRVGLNRLERIIKERMTVGETDSLTPAQLVNPKPLVAAIKEFFGSSQLSQFMDQTNPLAELTHKRRISALGPGGLTRERAGFAVRDIHPSHYGRLCPIETPEGPNAGLINSLATHARVNEYGFIETPFWEVNNGKVDKEGNPVYLSADLEDECRVAPGDVATDKEGNIIANLIPVRYRQDFEKVPPHQVDYVQLSPVQVISVATSLIPFLEHDDANRALMGSNMQRQAVPLLRPERPLVGTGLESQVARDSGMVPITKVNGIVSYVDANEIVVKDDHGNEHFHYLQKYQRSNQDTCLNQRPIVKIGDRVISGQVLADGSACEGGEIALGQNVLIAYMPWEGYNYEDAILVSERMVTDDLYTSVHIEKYEIEARQTKLGPEEITREIPNISEESLNNLDEMGIIRIGAFVESGDILVGKVTPKGESDQPPEEKLLRAIFGEKARDVRDNSLRVPKTEKGRVLDVRIYTREQGDELPPGANMVVRVYVAQRRKIQVGDKMAGRHGNKGIISRILPREDMPYLPDGTPVDIVLNPLGVPSRMNVGQVFELLMGWAASNLNCRVKVVPFDEMYGAEKSHQTVQAFLEEASKQPGKAWVYNPDDPGKLLLKDGRTGEPFDQPVAVGYSHFLKLVHLVDDKIHARSTGPYSLVTQQPLGGKAQQGGQRLGEMEVWALEAYGAAYTLQELLTVKSDDMQGRNEALNAIVKGKPIPRPGTPESFKVLMRELQSLGLDIGVYTDEGKEVDLMQDINPRRNTPSRPTYESLGTSEYEED.

The tract at residues 1072-1097 (QDINPRRNTPSRPTYESLGTSEYEED) is disordered. Over residues 1077–1091 (RRNTPSRPTYESLGT) the composition is skewed to polar residues.

The protein belongs to the RNA polymerase beta chain family. As to quaternary structure, in cyanobacteria the RNAP catalytic core is composed of 2 alpha, 1 beta, 1 beta', 1 gamma and 1 omega subunit. When a sigma factor is associated with the core the holoenzyme is formed, which can initiate transcription.

It carries out the reaction RNA(n) + a ribonucleoside 5'-triphosphate = RNA(n+1) + diphosphate. Its function is as follows. DNA-dependent RNA polymerase catalyzes the transcription of DNA into RNA using the four ribonucleoside triphosphates as substrates. The chain is DNA-directed RNA polymerase subunit beta from Prochlorococcus marinus (strain MIT 9215).